The primary structure comprises 803 residues: Dynein axonemal intermediate chain 4 (803 aa).

Positions 1 to 33 (MPSSPTSTRKQTNFTASVSAQSRKSISFGNPKS) are enriched in polar residues. 3 disordered regions span residues 1-41 (MPSS…GYAG), 88-109 (LYHPDPHAMPTKPSKLLTSQEG), and 143-163 (STVSKSSISTTESMTEDLEDP). Residues 143–155 (STVSKSSISTTES) are compositionally biased toward low complexity. WD repeat units follow at residues 492–532 (QSPY…NTPV), 541–589 (KHLG…DCHD), 616–656 (SRQA…QYLE), 660–700 (GHKG…PFFT), 703–742 (PTTYVVYDVAWSPKSAYIFAAANENRVEIWDLQISTLDPL), and 748–787 (NPGIKFTTVLFAKQTDCLLVGDSDGQVAVYELRNMPTPTE).

As to quaternary structure, part of the multisubunit axonemal dynein complex formed at least of two heavy chains and a number of intermediate and light chains. Associated with axonemal dynein subunits such as, DNAH2, DNAI3, and DYNLT1. Interacts with DYNLT1.

It localises to the cytoplasm. The protein resides in the cytoskeleton. Its subcellular location is the flagellum axoneme. It is found in the cilium axoneme. The protein localises to the dynein axonemal particle. Functionally, plays a critical role in the assembly of axonemal dynein complex, thereby playing a role in ciliary motility. The polypeptide is Dynein axonemal intermediate chain 4 (Rattus norvegicus (Rat)).